Consider the following 482-residue polypeptide: Aspartic proteinase 36 (482 aa).

The N-terminal stretch at 1-27 is a signal peptide; that stretch reads MVTTMDPSRISRIVAVVFVLVIQVVSG. The N-linked (GlcNAc...) asparagine glycan is linked to Asn32. A Peptidase A1 domain is found at 78-429; that stretch reads YFTKIKLGSP…DLENEVIGWA (352 aa). Residue Asp96 is part of the active site. Residues Asn178, Asn204, and Asn226 are each glycosylated (N-linked (GlcNAc...) asparagine). Asp310 is an active-site residue. The cysteines at positions 347 and 388 are disulfide-linked. N-linked (GlcNAc...) asparagine glycosylation is present at Asn432. A lipid anchor (GPI-anchor amidated serine) is attached at Ser456. The propeptide at 457–482 is removed in mature form; sequence AASSVMNGTLVTLLSILIWVFHSFTS. Asn463 is a glycosylation site (N-linked (GlcNAc...) asparagine).

This sequence belongs to the peptidase A1 family. Highly expressed in pollen and pollen tubes. Mostly expressed in roots, flowers and inflorescence, and at lower levels in stems, seedlings and siliques.

The protein localises to the cell membrane. Its subcellular location is the cytoplasm. It localises to the cytosol. Displays aspartic proteolytic activity. Together with A39, contributes to pollen and ovule development, including the apical cell wall constitution of the growing pollen tubes. The polypeptide is Aspartic proteinase 36 (Arabidopsis thaliana (Mouse-ear cress)).